The following is an 87-amino-acid chain: DNA-directed RNA polymerase subunit omega (87 aa).

The protein belongs to the RNA polymerase subunit omega family. In terms of assembly, the RNAP catalytic core consists of 2 alpha, 1 beta, 1 beta' and 1 omega subunit. When a sigma factor is associated with the core the holoenzyme is formed, which can initiate transcription.

The enzyme catalyses RNA(n) + a ribonucleoside 5'-triphosphate = RNA(n+1) + diphosphate. Promotes RNA polymerase assembly. Latches the N- and C-terminal regions of the beta' subunit thereby facilitating its interaction with the beta and alpha subunits. The protein is DNA-directed RNA polymerase subunit omega of Pseudomonas syringae pv. syringae (strain B728a).